The chain runs to 138 residues: Hydrogenase maturation factor HypA (138 aa).

Residue histidine 2 participates in Ni(2+) binding. Cysteine 73, cysteine 76, cysteine 110, and cysteine 113 together coordinate Zn(2+).

It belongs to the HypA/HybF family.

Involved in the maturation of [NiFe] hydrogenases. Required for nickel insertion into the metal center of the hydrogenase. The protein is Hydrogenase maturation factor HypA of Thermococcus sibiricus (strain DSM 12597 / MM 739).